A 107-amino-acid chain; its full sequence is uncharacterized protein (107 aa).

One can recognise a Glutaredoxin domain in the interval 6 to 107 (KARIDQLVTA…QEMLEVALAS (102 aa)). K23 lines the glutathione pocket. Residue C31 participates in [2Fe-2S] cluster binding. Residues R60 and 85–86 (SD) each bind glutathione.

Belongs to the glutaredoxin family. Monothiol subfamily.

This is an uncharacterized protein from Synechocystis sp. (strain ATCC 27184 / PCC 6803 / Kazusa).